Here is a 397-residue protein sequence, read N- to C-terminus: Elongation factor Tu (397 aa).

A tr-type G domain is found at 10 to 206 (KPHCNIGTIG…AVDTWIPDPQ (197 aa)). A G1 region spans residues 19–26 (GHVDHGKT). 19 to 26 (GHVDHGKT) is a binding site for GTP. Thr26 serves as a coordination point for Mg(2+). A G2 region spans residues 61 to 65 (GITIS). Positions 82–85 (DCPG) are G3. GTP is bound by residues 82 to 86 (DCPGH) and 137 to 140 (NKCD). Residues 137–140 (NKCD) form a G4 region. The interval 175-177 (SAL) is G5.

The protein belongs to the TRAFAC class translation factor GTPase superfamily. Classic translation factor GTPase family. EF-Tu/EF-1A subfamily. In terms of assembly, monomer.

It localises to the cytoplasm. It carries out the reaction GTP + H2O = GDP + phosphate + H(+). GTP hydrolase that promotes the GTP-dependent binding of aminoacyl-tRNA to the A-site of ribosomes during protein biosynthesis. The polypeptide is Elongation factor Tu (Lachnoclostridium phytofermentans (strain ATCC 700394 / DSM 18823 / ISDg) (Clostridium phytofermentans)).